Consider the following 396-residue polypeptide: Elongation factor Tu (396 aa).

A tr-type G domain is found at 10–206 (KPHVNVGTIG…ALDTYIPTPE (197 aa)). The G1 stretch occupies residues 19 to 26 (GHVDHGKT). 19–26 (GHVDHGKT) lines the GTP pocket. Threonine 26 contributes to the Mg(2+) binding site. The G2 stretch occupies residues 60–64 (GITIN). The tract at residues 81–84 (DCPG) is G3. Residues 81-85 (DCPGH) and 136-139 (NKCD) contribute to the GTP site. Residues 136–139 (NKCD) form a G4 region. The interval 174–176 (SAK) is G5.

This sequence belongs to the TRAFAC class translation factor GTPase superfamily. Classic translation factor GTPase family. EF-Tu/EF-1A subfamily. Monomer.

The protein localises to the cytoplasm. The enzyme catalyses GTP + H2O = GDP + phosphate + H(+). Its function is as follows. GTP hydrolase that promotes the GTP-dependent binding of aminoacyl-tRNA to the A-site of ribosomes during protein biosynthesis. The polypeptide is Elongation factor Tu (Burkholderia cepacia (Pseudomonas cepacia)).